The primary structure comprises 277 residues: Outer plastidial membrane protein porin (277 aa).

The protein belongs to the eukaryotic mitochondrial porin (TC 1.B.8.1) family.

It localises to the plastid outer membrane. Forms a channel through the cell membrane that allows diffusion of small hydrophilic molecules. The channel adopts an open conformation at low or zero membrane potential and a closed conformation at potentials above 30-40 mV. The open state has a weak anion selectivity whereas the closed state is cation-selective. The polypeptide is Outer plastidial membrane protein porin (POR1) (Zea mays (Maize)).